The primary structure comprises 300 residues: MRLLISCILILSILVNFISGHAVLVAPTPFSTNPSKTKLCGGGTKQTVAQITWCPNSSKTNRATWKIVVGDGAGAVTFKLATNGGTTEGDFTTTLTSKVLSGSDPKEVGTYYMDVRVPTGTTCTGTNGICTLQAYTESSGWYSCSAIKLDSSACDKAAEETALVEYNVQVKDNVKFCDQVVNKVVLLPAGTQLGEYDQRTQGVFKNNMANPLVIGQNSSQCGNLYEKVLCDVSFPLAPGSDGKPIYQVTQKQCEDFIEVCDVVSHVELYPCSIYGDGNGSNLIIIPTLLIISILSLILMF.

The signal sequence occupies residues 1–20 (MRLLISCILILSILVNFISG). Over 21-279 (HAVLVAPTPF…PCSIYGDGNG (259 aa)) the chain is Extracellular. N-linked (GlcNAc...) asparagine glycans are attached at residues Asn-56, Asn-217, and Asn-278. Residues 280–300 (SNLIIIPTLLIISILSLILMF) traverse the membrane as a helical segment.

It localises to the membrane. This is an uncharacterized protein from Dictyostelium discoideum (Social amoeba).